Reading from the N-terminus, the 431-residue chain is DNA polymerase delta subunit 2 (431 aa).

It belongs to the DNA polymerase delta/II small subunit family. As to quaternary structure, component of both the DNA polymerase delta and DNA polymerase zeta complexes. The DNA polymerase delta complex consisting of three subunits: the catalytic subunit PolD1 and two accessory subunits PolD2/Pol31 and PolD3/Pol32. Within the delta complex, interacts with both PolD1 and PolD3, and is able to interact with PolD1 in the absence of PolD3. Component of the DNA polymerase zeta complex consisting of four subunits: the catalytic subunit PolZ1 and three accessory subunits PolZ2/Rev7, PolD2/Pol31 and PolD3/Pol32. Expressed in ovaries and embryos (at the protein level).

The protein localises to the nucleus. The protein resides in the nucleoplasm. Its function is as follows. Accessory component of both the DNA polymerase delta complex and possibly the DNA polymerase zeta complex. As a component of the delta complex, participates in high fidelity genome replication, including lagging strand synthesis, DNA recombination and repair. Appears to promote the function of the DNA pol-delta complex accessory subunit PolD3 in both embryonic and postembryonic somatic cells. This Drosophila melanogaster (Fruit fly) protein is DNA polymerase delta subunit 2.